The following is a 541-amino-acid chain: Chaperonin GroEL (541 aa).

Residues 29–32, 86–90, G413, and D495 contribute to the ATP site; these read TLGP and DGTTT.

Belongs to the chaperonin (HSP60) family. In terms of assembly, forms a cylinder of 14 subunits composed of two heptameric rings stacked back-to-back. Interacts with the co-chaperonin GroES.

The protein resides in the cytoplasm. It carries out the reaction ATP + H2O + a folded polypeptide = ADP + phosphate + an unfolded polypeptide.. Functionally, together with its co-chaperonin GroES, plays an essential role in assisting protein folding. The GroEL-GroES system forms a nano-cage that allows encapsulation of the non-native substrate proteins and provides a physical environment optimized to promote and accelerate protein folding. This is Chaperonin GroEL from Thermoanaerobacter pseudethanolicus (strain ATCC 33223 / 39E) (Clostridium thermohydrosulfuricum).